The chain runs to 221 residues: UPF0758 protein YicR (221 aa).

In terms of domain architecture, MPN spans 99–221 (ALLSPEMTRE…YVSFAERGWI (123 aa)). Zn(2+) contacts are provided by His170, His172, and Asp183. The JAMM motif motif lies at 170–183 (HNHPSGCAEPSKAD).

Belongs to the UPF0758 family. YicR subfamily.

This chain is UPF0758 protein YicR, found in Salmonella agona (strain SL483).